The following is a 110-amino-acid chain: U1-lycotoxin-Ls1dd (110 aa).

An N-terminal signal peptide occupies residues 1 to 20 (MKFVLLFGVLLVTLFSYSSA). A propeptide spanning residues 21–44 (EMLDDFDQADEDELLSLIEKEEAR) is cleaved from the precursor. 4 cysteine pairs are disulfide-bonded: C47–C62, C54–C71, C61–C89, and C73–C87.

The protein belongs to the neurotoxin 19 (CSTX) family. 03 subfamily. In terms of tissue distribution, expressed by the venom gland.

The protein localises to the secreted. This Lycosa singoriensis (Wolf spider) protein is U1-lycotoxin-Ls1dd.